The sequence spans 616 residues: Putative L-type lectin-domain containing receptor kinase I.10 (616 aa).

An N-terminal signal peptide occupies residues 1–22; sequence MAWGLFQILMISFFHLIKLSSQ. The Extracellular portion of the chain corresponds to 23 to 288; sequence QETSFVYETF…RAEHKNLSPL (266 aa). The legume-lectin like stretch occupies residues 24 to 258; sequence ETSFVYETFR…YQYVLSWSFS (235 aa). N-linked (GlcNAc...) asparagine glycosylation is found at N56, N124, N181, N204, and N225. The chain crosses the membrane as a helical span at residues 289–309; that stretch reads FIDLLGFLAIMGLCTLTGMYF. Topologically, residues 310–616 are cytoplasmic; it reads FKRGKYAEIT…SAASSATNSP (307 aa). In terms of domain architecture, Protein kinase spans 343 to 616; that stretch reads FHKDGFLGKG…SAASSATNSP (274 aa). ATP-binding positions include 349–357 and K371; that span reads LGKGGFGEV. D467 acts as the Proton acceptor in catalysis.

The protein in the C-terminal section; belongs to the protein kinase superfamily. Ser/Thr protein kinase family. This sequence in the N-terminal section; belongs to the leguminous lectin family.

The protein resides in the cell membrane. It catalyses the reaction L-seryl-[protein] + ATP = O-phospho-L-seryl-[protein] + ADP + H(+). The enzyme catalyses L-threonyl-[protein] + ATP = O-phospho-L-threonyl-[protein] + ADP + H(+). This is Putative L-type lectin-domain containing receptor kinase I.10 (LECRK110) from Arabidopsis thaliana (Mouse-ear cress).